Here is a 281-residue protein sequence, read N- to C-terminus: N-acetyltransferase ECO1 (281 aa).

The segment at 33–57 (VKCDKCEMSYSSTSIEDRAIHEKYH) adopts a CCHH-type zinc-finger fold. The interval 86-105 (LSRSTGTITPLNSSPLKKSS) is disordered. A compositionally biased stretch (low complexity) spans 95 to 105 (PLNSSPLKKSS). An N6-acetyllysine; by autocatalysis modification is found at K223.

It belongs to the acetyltransferase family. ECO subfamily. Binds specifically to CHL12, RFC1, RFC2, RFC3, RFC4, RFC5 and RAD24 when members of an RFC complex. Interacts with CHL1 and MPS3. In terms of processing, autoacetylates in vitro.

The protein resides in the nucleus. Required for establishment of sister chromatid cohesion during S phase but not for its further maintenance during G2 or M phases or for loading the cohesin complex onto DNA. Interacts with the three known alternate replication factor C (RFC) complexes, suggesting that these complexes have essential but redundant activity in cohesion establishment. Acts by acetylating the cohesin complex component SMC3. In vitro, possesses acetyltransferase activity where it can acetylate itself and components of the cohesin complex (MCD1, IRR1 and PDS5), but is unable to acetylate histones. The polypeptide is N-acetyltransferase ECO1 (ECO1) (Saccharomyces cerevisiae (strain ATCC 204508 / S288c) (Baker's yeast)).